Here is a 726-residue protein sequence, read N- to C-terminus: Catalase-peroxidase (726 aa).

A cross-link (tryptophyl-tyrosyl-methioninium (Trp-Tyr) (with M-250)) is located at residues Trp-96–Tyr-224. The active-site Proton acceptor is the His-97. The tryptophyl-tyrosyl-methioninium (Tyr-Met) (with W-96) cross-link spans Tyr-224–Met-250. Heme b is bound at residue His-265.

This sequence belongs to the peroxidase family. Peroxidase/catalase subfamily. As to quaternary structure, homodimer or homotetramer. Requires heme b as cofactor. In terms of processing, formation of the three residue Trp-Tyr-Met cross-link is important for the catalase, but not the peroxidase activity of the enzyme.

It carries out the reaction H2O2 + AH2 = A + 2 H2O. The catalysed reaction is 2 H2O2 = O2 + 2 H2O. Its function is as follows. Bifunctional enzyme with both catalase and broad-spectrum peroxidase activity. The chain is Catalase-peroxidase from Vibrio campbellii (strain ATCC BAA-1116).